We begin with the raw amino-acid sequence, 335 residues long: N-acetyl-gamma-glutamyl-phosphate reductase (335 aa).

The active site involves Cys156.

It belongs to the NAGSA dehydrogenase family. Type 1 subfamily.

It localises to the cytoplasm. The enzyme catalyses N-acetyl-L-glutamate 5-semialdehyde + phosphate + NADP(+) = N-acetyl-L-glutamyl 5-phosphate + NADPH + H(+). The protein operates within amino-acid biosynthesis; L-arginine biosynthesis; N(2)-acetyl-L-ornithine from L-glutamate: step 3/4. Its function is as follows. Catalyzes the NADPH-dependent reduction of N-acetyl-5-glutamyl phosphate to yield N-acetyl-L-glutamate 5-semialdehyde. The chain is N-acetyl-gamma-glutamyl-phosphate reductase from Aeromonas hydrophila subsp. hydrophila (strain ATCC 7966 / DSM 30187 / BCRC 13018 / CCUG 14551 / JCM 1027 / KCTC 2358 / NCIMB 9240 / NCTC 8049).